The sequence spans 381 residues: Mannose 6-phosphate receptor-like protein 1 (381 aa).

Residues 1-23 form the signal peptide; sequence MLKRSSLIYLSCVLIITIPILLH. The Lumenal segment spans residues 24–236; it reads VYNGPGLSHE…ACPTSNKKNE (213 aa). Disordered regions lie at residues 33–57 and 81–104; these read EANE…KSEN and STPN…SSKT. The region spanning 61 to 230 is the MRH domain; it reads LFCAVTNPVT…EVRSIHACPT (170 aa). A disulfide bridge connects residues Cys-63 and Cys-122. 4 N-linked (GlcNAc...) asparagine glycosylation sites follow: Asn-116, Asn-136, Asn-178, and Asn-215. 2 disulfide bridges follow: Cys-182–Cys-216 and Cys-197–Cys-228. A helical membrane pass occupies residues 237–257; the sequence is VNVLGIFIGIFAIFFLVEFAG. At 258 to 381 the chain is on the cytoplasmic side; sequence RRWIYAKLNR…DHPTLADNSV (124 aa). Ser-335, Ser-339, Ser-342, Ser-371, and Ser-380 each carry phosphoserine. The interval 360–381 is disordered; that stretch reads DSLDINSHTTESDHPTLADNSV.

This sequence belongs to the MRL1/IGF2R family.

The protein resides in the golgi apparatus. It is found in the trans-Golgi network membrane. It localises to the endosome membrane. In terms of biological role, sorting receptor involved in the transport of vacuolar enzymes from the Golgi complex to the vacuole. Involved in the delivery and maturation of PEP4 (vacuolar proteinase A) and PRB1 (vacuolar proteinase B). This chain is Mannose 6-phosphate receptor-like protein 1 (MRL1), found in Saccharomyces cerevisiae (strain ATCC 204508 / S288c) (Baker's yeast).